The following is a 763-amino-acid chain: MDTRGCAWLLLLLSLPQGQSHQPLHRSKRRWVLTTLELQEEDPGPFPKLVGELFNNMSNNVSLIYLIRGPGVDEFPEIGLFSIEDHQSGKIYVHRPVDREVTPSFMVHFDAVDRSTGKVVDESLIFNIRIRDVNDHAPQFPEKEFNISVKESQAAGQPIFQLLTVDLDQENTPNSQVLYFLVSQTPLLRESGFRIDLISGEVRLSGCLHYETAPLFTLIVRASDCGEPSLTSTATIHVSVEDSNNHMPTFMEDRYEIRISEGQVEQGVLYLPVQDGDSPFTPAWRTQFNIWDGNEEGHFDIVTDPETNQGLLSIIKPLDYESQVAHSLVVVVENQEQLFVCTEGQLQPLRKAMASTMVSVQVLDTNDPPAFHPQSFIVSEEDGAWPAIQLGYFNATDPDRADSQIRYKLVHDPENWVTVDEKSGVVTTKKQIDRESPHVNDSFYTIIVHAVDNGLPPLTGTGTLMLFLSDVNDNAPTLRPHSRHLEVCESAGSQPLLIEAEDADLDPYADPFTFDLDNAQGDVEETWMLRTKQGEGHSAELTMLRSVPPGDYLVPLFIADRQGLAQKQTVHVRICSCRSGSECEEPSDTWLLWWALSPVGAALMVLSAALLCLLRCSCTFGPKRLRGFIPSDSGHQTLIVYNEESKVPSAQGCDTFFEPRGVKTLLSSTPVYLDRMVPRQQPLQLLEGRVVEAWSQKLQSIDVLEGDTGYLPHVYREEGECEGAETLSSLTFLEQDLSPKLLGCSGSKSTPSEAMCFTSRVPS.

Positions 1–20 (MDTRGCAWLLLLLSLPQGQS) are cleaved as a signal peptide. Cadherin domains are found at residues 21-140 (HQPL…APQF), 141-250 (PEKE…MPTF), 251-371 (MEDR…PPAF), and 370-478 (AFHP…APTL). Over 21-590 (HQPLHRSKRR…SECEEPSDTW (570 aa)) the chain is Extracellular. N56, N60, and N146 each carry an N-linked (GlcNAc...) asparagine glycan. Residues N394 and N440 are each glycosylated (N-linked (GlcNAc...) asparagine). A helical membrane pass occupies residues 591-611 (LLWWALSPVGAALMVLSAALL). Residues 612-763 (CLLRCSCTFG…AMCFTSRVPS (152 aa)) lie on the Cytoplasmic side of the membrane.

In terms of assembly, homodimer. Component of a cadherin:catenin adhesion complex composed of at least of CDH26, beta-catenin/CTNNB1, alpha-catenin/CTNNA1 and p120 catenin/CTNND1. N-glycosylated.

It localises to the cell membrane. Cadherins are calcium-dependent cell adhesion proteins. They preferentially interact with themselves in a homophilic manner in connecting cells; cadherins may thus contribute to the sorting of heterogeneous cell types. Ligand for integrins alpha-E/beta-7, ITGAE:ITGAB7, alpha-4/beta-7, ITGA4:ITGAB7 and alpha-4/beta-1, ITGA4:ITGAB1 through which modulates CD4(+) T cells activation. The polypeptide is Cadherin-like protein 26 (Cdh26) (Mus musculus (Mouse)).